Reading from the N-terminus, the 408-residue chain is uncharacterized protein (408 aa).

This is an uncharacterized protein from Methanocaldococcus jannaschii (strain ATCC 43067 / DSM 2661 / JAL-1 / JCM 10045 / NBRC 100440) (Methanococcus jannaschii).